We begin with the raw amino-acid sequence, 452 residues long: UDP-glycosyltransferase 79B11 (452 aa).

UDP-alpha-D-glucose contacts are provided by residues serine 260, 319–325 (VQQPSWQ), 340–348 (HCGFGSMWE), and 362–365 (LNDQ).

The protein belongs to the UDP-glycosyltransferase family.

The chain is UDP-glycosyltransferase 79B11 (UGT79B11) from Arabidopsis thaliana (Mouse-ear cress).